The sequence spans 224 residues: Flagellar L-ring protein (224 aa).

An N-terminal signal peptide occupies residues Met1 to Ala15. A lipid anchor (N-palmitoyl cysteine) is attached at Cys16. The S-diacylglycerol cysteine moiety is linked to residue Cys16.

The protein belongs to the FlgH family. The basal body constitutes a major portion of the flagellar organelle and consists of four rings (L,P,S, and M) mounted on a central rod.

The protein localises to the cell outer membrane. The protein resides in the bacterial flagellum basal body. Its function is as follows. Assembles around the rod to form the L-ring and probably protects the motor/basal body from shearing forces during rotation. The protein is Flagellar L-ring protein of Shewanella baltica (strain OS223).